We begin with the raw amino-acid sequence, 1040 residues long: Multidrug resistance protein MdtB (1040 aa).

12 helical membrane passes run 25 to 45 (LLMA…PVAA), 347 to 367 (LMLA…NIPA), 369 to 389 (IIPG…MVFL), 396 to 416 (LTLM…IVVI), 440 to 460 (IGFT…PLLF), 472 to 492 (FAVT…TLTP), 537 to 557 (WLTL…WIVI), 863 to 883 (LGST…VLGV), 888 to 908 (FIHP…ALLA), 910 to 930 (IIAG…LIGI), 968 to 988 (ILMT…STGV), and 998 to 1018 (IAMV…TPVI).

Belongs to the resistance-nodulation-cell division (RND) (TC 2.A.6) family. MdtB subfamily. As to quaternary structure, part of a tripartite efflux system composed of MdtA, MdtB and MdtC. MdtB forms a heteromultimer with MdtC.

Its subcellular location is the cell inner membrane. The sequence is that of Multidrug resistance protein MdtB from Salmonella dublin (strain CT_02021853).